A 395-amino-acid polypeptide reads, in one-letter code: MTTPFKRVHLIVMDSVGIGEAPDAAAFNDEGSHTLKHTLEGFNQTLPNLEKLGLGNIEELPVVNKVEQPGAFYTKLSEASVGKDTMTGHWEIMGLNIMQPFKVYPNGFPDELIQEIEEMTGRKVVANKPASGTAIIDELGEHQMKTGDLIVYTSADPVLQIAAHEDIIPLEELYDICEKVRELTKDPKYLIGRVIARPYVGEPGNFTRTSNRHDYALKPFGKTVMNTLKDNNYDVIAIGKINDIYDGEGVTEAIRTKNNMDGMDQLINVVKKDFNGISFLNLVDFDALYGHRRDKEGYAQAIKDFDERLPELIDNLQEDDLVIITADHGNDPIADGTDHTREYIPVLMFSPKIDKYHELSGDSTFSSIGATIADNFNVELPEFGKSYLNEMGVEH.

Mn(2+)-binding residues include aspartate 14, aspartate 286, histidine 291, aspartate 327, histidine 328, and histidine 339.

This sequence belongs to the phosphopentomutase family. Mn(2+) serves as cofactor.

The protein resides in the cytoplasm. It carries out the reaction 2-deoxy-alpha-D-ribose 1-phosphate = 2-deoxy-D-ribose 5-phosphate. It catalyses the reaction alpha-D-ribose 1-phosphate = D-ribose 5-phosphate. Its pathway is carbohydrate degradation; 2-deoxy-D-ribose 1-phosphate degradation; D-glyceraldehyde 3-phosphate and acetaldehyde from 2-deoxy-alpha-D-ribose 1-phosphate: step 1/2. In terms of biological role, isomerase that catalyzes the conversion of deoxy-ribose 1-phosphate (dRib-1-P) and ribose 1-phosphate (Rib-1-P) to deoxy-ribose 5-phosphate (dRib-5-P) and ribose 5-phosphate (Rib-5-P), respectively. In Staphylococcus haemolyticus (strain JCSC1435), this protein is Phosphopentomutase.